We begin with the raw amino-acid sequence, 98 residues long: DNA-binding protein Fis (98 aa).

Residues 74-93 (QTRAATMLGINRGTLRKKLK) constitute a DNA-binding region (H-T-H motif).

Belongs to the transcriptional regulatory Fis family. In terms of assembly, homodimer.

In terms of biological role, activates ribosomal RNA transcription. Plays a direct role in upstream activation of rRNA promoters. The chain is DNA-binding protein Fis from Mannheimia haemolytica (Pasteurella haemolytica).